Reading from the N-terminus, the 430-residue chain is Adenylosuccinate synthetase (430 aa).

GTP contacts are provided by residues 12–18 and 40–42; these read GDEGKGK and GHT. D13 functions as the Proton acceptor in the catalytic mechanism. 2 residues coordinate Mg(2+): D13 and G40. IMP is bound by residues 13 to 16, 38 to 41, T130, R144, Q224, and T239; these read DEGK and NAGH. H41 (proton donor) is an active-site residue. The segment at 277-297 is disordered; the sequence is PFPTEQDNETGRKIGERGREF. A compositionally biased stretch (basic and acidic residues) spans 285–296; that stretch reads ETGRKIGERGRE. A substrate-binding site is contributed by 299–305; the sequence is TNTGRPR. R303 serves as a coordination point for IMP. GTP contacts are provided by residues R305, 331–333, and 413–415; these read KLD and STS.

Belongs to the adenylosuccinate synthetase family. Homodimer. Mg(2+) serves as cofactor.

It localises to the cytoplasm. It carries out the reaction IMP + L-aspartate + GTP = N(6)-(1,2-dicarboxyethyl)-AMP + GDP + phosphate + 2 H(+). The protein operates within purine metabolism; AMP biosynthesis via de novo pathway; AMP from IMP: step 1/2. In terms of biological role, plays an important role in the de novo pathway of purine nucleotide biosynthesis. Catalyzes the first committed step in the biosynthesis of AMP from IMP. This is Adenylosuccinate synthetase from Bradyrhizobium sp. (strain ORS 278).